The chain runs to 1034 residues: Enteropeptidase (1034 aa).

Positions 1–51 (MGSKRIIPSRHRSLSTYEVMFTALFAILMVLCAGLIAVSWLTIKGSEKDAA) are excised as a propeptide. Residues 2-18 (GSKRIIPSRHRSLSTYE) are Cytoplasmic-facing. A helical; Signal-anchor for type II membrane protein membrane pass occupies residues 19 to 47 (VMFTALFAILMVLCAGLIAVSWLTIKGSE). At 48–1034 (KDAALGKSHE…FTEWIQSFLH (987 aa)) the chain is on the extracellular side. In terms of domain architecture, SEA spans 54 to 169 (KSHEARGTMK…NSIDITESLE (116 aa)). Asn-116, Asn-147, Asn-170, and Asn-194 each carry an N-linked (GlcNAc...) asparagine glycan. The LDL-receptor class A 1 domain occupies 197 to 238 (IECLPGSRPCADALKCIAVDLFCDGELNCPDGSDEDSKICAT). Cystine bridges form between Cys-199-Cys-212, Cys-206-Cys-225, Cys-219-Cys-236, and Cys-240-Cys-268. Positions 240–349 (CDGKFLLTES…IGFNATYTAF (110 aa)) constitute a CUB 1 domain. 9 N-linked (GlcNAc...) asparagine glycosylation sites follow: Asn-283, Asn-343, Asn-350, Asn-403, Asn-455, Asn-485, Asn-518, Asn-549, and Asn-645. In terms of domain architecture, MAM spans 357-519 (DEKINCNFED…ISLTYGICNV (163 aa)). Residues Cys-539 and Cys-567 are joined by a disulfide bond. The CUB 2 domain occupies 539–649 (CGGPFELWEP…GGFKANFTTG (111 aa)). An LDL-receptor class A 2 domain is found at 656–694 (EPCKEDNFQCENGECVLLVNLCDGFSHCKDGSDEAHCVR). Disulfide bonds link Cys-658/Cys-670, Cys-665/Cys-683, and Cys-677/Cys-692. The 94-residue stretch at 693 to 786 (VRFLNGTANN…LILLQCNHKS (94 aa)) folds into the SRCR domain. N-linked (GlcNAc...) asparagine glycans are attached at residues Asn-697, Asn-701, Asn-721, Asn-740, and Asn-761. 6 disulfide bridges follow: Cys-772-Cys-782, Cys-787-Cys-911, Cys-825-Cys-841, Cys-925-Cys-992, Cys-956-Cys-971, and Cys-982-Cys-1010. In terms of domain architecture, Peptidase S1 spans 800–1034 (IVGGNDSREG…FTEWIQSFLH (235 aa)). Asn-804 is a glycosylation site (N-linked (GlcNAc...) asparagine). The active-site Charge relay system is the His-840. Residue Asn-863 is glycosylated (N-linked (GlcNAc...) asparagine). Asp-891 serves as the catalytic Charge relay system. N-linked (GlcNAc...) asparagine glycosylation is found at Asn-902 and Asn-964. Ser-986 serves as the catalytic Charge relay system.

It belongs to the peptidase S1 family. In terms of assembly, heterotrimer of a catalytic (light) chain, a multidomain (heavy) chain, and a mini chain. In terms of processing, the chains are derived from a single precursor that is cleaved by a trypsin-like protease. Post-translationally, the mini chain may be cleaved by elastase.

The protein localises to the membrane. It carries out the reaction Activation of trypsinogen by selective cleavage of 6-Lys-|-Ile-7 bond.. Responsible for initiating activation of pancreatic proteolytic proenzymes (trypsin, chymotrypsin and carboxypeptidase A). It catalyzes the conversion of trypsinogen to trypsin which in turn activates other proenzymes including chymotrypsinogen, procarboxypeptidases, and proelastases. The sequence is that of Enteropeptidase (TMPRSS15) from Sus scrofa (Pig).